Here is a 391-residue protein sequence, read N- to C-terminus: Nuclear hormone receptor family member nhr-115 (391 aa).

Positions 5–77 (LFPCQICGQN…IGMDASKFQY (73 aa)) form a DNA-binding region, nuclear receptor. The segment at 8 to 28 (CQICGQNSHGTHFGIVSCRAC) adopts an NR C4-type zinc-finger fold. The NR C4-type; atypical zinc finger occupies 41–65 (ARKGCLTNFKDKGSCFCKPCRLRKC). Residues 130 to 388 (YLDHGCETPI…FSHPEMFDDS (259 aa)) form the NR LBD domain.

This sequence belongs to the nuclear hormone receptor family.

Its subcellular location is the nucleus. Functionally, orphan nuclear receptor. The chain is Nuclear hormone receptor family member nhr-115 (nhr-115) from Caenorhabditis elegans.